Reading from the N-terminus, the 632-residue chain is Effector protein hopAD1 (632 aa).

Residues 13–34 (TAVDSSLPTSATSQTISNTKSR) form a disordered region. A compositionally biased stretch (polar residues) spans 15–32 (VDSSLPTSATSQTISNTK).

The protein localises to the secreted. This Pseudomonas syringae pv. tomato (strain ATCC BAA-871 / DC3000) protein is Effector protein hopAD1 (hopAD1).